We begin with the raw amino-acid sequence, 55 residues long: Cytochrome b-c1 complex subunit 9 (55 aa).

The Mitochondrial matrix segment spans residues 1–15 (MKVIYNTLFKRTSTY). Residues 16–41 (AVAIIASAFFFERALDVTSVAIFEGI) form a helical membrane-spanning segment. The Chloroplast intermembrane segment spans residues 42 to 55 (NKGKLWKDIKGKYE).

This sequence belongs to the UQCR10/QCR9 family. In terms of assembly, component of the ubiquinol-cytochrome c oxidoreductase (cytochrome b-c1 complex, complex III, CIII), a multisubunit enzyme composed of 3 respiratory subunits cytochrome b, cytochrome c1 and Rieske protein, 2 core protein subunits, and additional low-molecular weight protein subunits. The complex exists as an obligatory dimer and forms supercomplexes (SCs) in the inner mitochondrial membrane with cytochrome c oxidase (complex IV, CIV).

The protein resides in the mitochondrion inner membrane. Functionally, component of the ubiquinol-cytochrome c oxidoreductase, a multisubunit transmembrane complex that is part of the mitochondrial electron transport chain which drives oxidative phosphorylation. The respiratory chain contains 3 multisubunit complexes succinate dehydrogenase (complex II, CII), ubiquinol-cytochrome c oxidoreductase (cytochrome b-c1 complex, complex III, CIII) and cytochrome c oxidase (complex IV, CIV), that cooperate to transfer electrons derived from NADH and succinate to molecular oxygen, creating an electrochemical gradient over the inner membrane that drives transmembrane transport and the ATP synthase. The cytochrome b-c1 complex catalyzes electron transfer from ubiquinol to cytochrome c, linking this redox reaction to translocation of protons across the mitochondrial inner membrane, with protons being carried across the membrane as hydrogens on the quinol. In the process called Q cycle, 2 protons are consumed from the matrix, 4 protons are released into the intermembrane space and 2 electrons are passed to cytochrome c. This chain is Cytochrome b-c1 complex subunit 9 (ox), found in Drosophila melanogaster (Fruit fly).